A 1184-amino-acid polypeptide reads, in one-letter code: DNA-directed RNA polymerase subunit beta' (1184 aa).

Positions 60, 62, 75, and 78 each coordinate Zn(2+). D449, D451, and D453 together coordinate Mg(2+). Zn(2+)-binding residues include C794, C867, C874, and C877. Residues 1165 to 1184 form a disordered region; that stretch reads NDQQERQDKEKEETEVKASN.

Belongs to the RNA polymerase beta' chain family. The RNAP catalytic core consists of 2 alpha, 1 beta, 1 beta' and 1 omega subunit. When a sigma factor is associated with the core the holoenzyme is formed, which can initiate transcription. It depends on Mg(2+) as a cofactor. Zn(2+) serves as cofactor.

The enzyme catalyses RNA(n) + a ribonucleoside 5'-triphosphate = RNA(n+1) + diphosphate. Its function is as follows. DNA-dependent RNA polymerase catalyzes the transcription of DNA into RNA using the four ribonucleoside triphosphates as substrates. This chain is DNA-directed RNA polymerase subunit beta', found in Thermoanaerobacter pseudethanolicus (strain ATCC 33223 / 39E) (Clostridium thermohydrosulfuricum).